Reading from the N-terminus, the 629-residue chain is Phosphomethylpyrimidine synthase (629 aa).

A disordered region spans residues 1–30 (MTTKLKNASNLSESAQVDQQSVQPFTRSQK). Residues Asn233, Met262, Tyr291, His327, 347-349 (SRG), 388-391 (DGLR), and Glu427 each bind substrate. A Zn(2+)-binding site is contributed by His431. Tyr454 is a substrate binding site. His495 contacts Zn(2+). [4Fe-4S] cluster is bound by residues Cys575, Cys578, and Cys583.

It belongs to the ThiC family. Homodimer. Requires [4Fe-4S] cluster as cofactor.

The catalysed reaction is 5-amino-1-(5-phospho-beta-D-ribosyl)imidazole + S-adenosyl-L-methionine = 4-amino-2-methyl-5-(phosphooxymethyl)pyrimidine + CO + 5'-deoxyadenosine + formate + L-methionine + 3 H(+). Its pathway is cofactor biosynthesis; thiamine diphosphate biosynthesis. Its function is as follows. Catalyzes the synthesis of the hydroxymethylpyrimidine phosphate (HMP-P) moiety of thiamine from aminoimidazole ribotide (AIR) in a radical S-adenosyl-L-methionine (SAM)-dependent reaction. This chain is Phosphomethylpyrimidine synthase, found in Pseudomonas fluorescens (strain ATCC BAA-477 / NRRL B-23932 / Pf-5).